Here is a 363-residue protein sequence, read N- to C-terminus: Fructose-bisphosphate aldolase C (363 aa).

At Tyr5 the chain carries Phosphotyrosine. Ser36, Ser39, and Ser45 each carry phosphoserine. Arg56 is a substrate binding site. Residue Lys111 is modified to N6-acetyllysine. Position 147 (Lys147) interacts with substrate. Glu188 (proton acceptor) is an active-site residue. Lys230 acts as the Schiff-base intermediate with dihydroxyacetone-P in catalysis.

The protein belongs to the class I fructose-bisphosphate aldolase family. As to quaternary structure, homotetramer. Interacts with ATP6V1E1. As to expression, high expression in the adult brain.

It carries out the reaction beta-D-fructose 1,6-bisphosphate = D-glyceraldehyde 3-phosphate + dihydroxyacetone phosphate. It participates in carbohydrate degradation; glycolysis; D-glyceraldehyde 3-phosphate and glycerone phosphate from D-glucose: step 4/4. The chain is Fructose-bisphosphate aldolase C (Aldoc) from Rattus norvegicus (Rat).